A 659-amino-acid polypeptide reads, in one-letter code: DNA helicase/primase complex-associated protein (659 aa).

Belongs to the herpesviridae HEPA family. In terms of assembly, associates with the primase and the helicase to form the helicase-primase complex. Interacts with the origin-binding protein. Interacts with the polymerase catalytic subunit.

It localises to the host nucleus. Functionally, component of the helicase/primase complex. Unwinds the DNA at the replication forks and generates single-stranded DNA for both leading and lagging strand synthesis. The primase synthesizes short RNA primers on the lagging strand that the polymerase presumably elongates using dNTPs. The primase-associated factor has no known catalytic activity in the complex and may serve to facilitate the formation of the replisome by directly interacting with the origin-binding protein and the polymerase. The protein is DNA helicase/primase complex-associated protein (U74) of Human herpesvirus 7 (strain JI) (HHV-7).